The following is a 305-amino-acid chain: Ribonuclease BN (305 aa).

Residues H64, H66, D68, H69, H141, D212, and H270 each coordinate Zn(2+). The Proton acceptor role is filled by D68.

This sequence belongs to the RNase Z family. RNase BN subfamily. As to quaternary structure, homodimer. The cofactor is Zn(2+).

Functionally, zinc phosphodiesterase, which has both exoribonuclease and endoribonuclease activities. This Escherichia coli O17:K52:H18 (strain UMN026 / ExPEC) protein is Ribonuclease BN.